A 103-amino-acid polypeptide reads, in one-letter code: Cyanovirin-N homolog (103 aa).

This sequence belongs to the cyanovirin-N family.

Its function is as follows. Mannose-binding lectin. The protein is Cyanovirin-N homolog of Tuber borchii (White truffle).